Here is a 148-residue protein sequence, read N- to C-terminus: Deoxyuridine 5'-triphosphate nucleotidohydrolase (148 aa).

Residues 67-69 (RSG), N80, 84-86 (LID), and M94 each bind substrate.

This sequence belongs to the dUTPase family. The cofactor is Mg(2+).

It catalyses the reaction dUTP + H2O = dUMP + diphosphate + H(+). It participates in pyrimidine metabolism; dUMP biosynthesis; dUMP from dCTP (dUTP route): step 2/2. In terms of biological role, this enzyme is involved in nucleotide metabolism: it produces dUMP, the immediate precursor of thymidine nucleotides and it decreases the intracellular concentration of dUTP so that uracil cannot be incorporated into DNA. The polypeptide is Deoxyuridine 5'-triphosphate nucleotidohydrolase (Burkholderia lata (strain ATCC 17760 / DSM 23089 / LMG 22485 / NCIMB 9086 / R18194 / 383)).